The primary structure comprises 326 residues: Large ribosomal subunit protein uL4 (326 aa).

The large ribosomal subunit protein uL4 stretch occupies residues Met-1–Gly-211. Disordered regions lie at residues Ala-44–Gly-76 and Gly-211–Asp-326. The span at Gly-60–Gly-71 shows a compositional bias: basic residues. The segment at Ala-212–Asp-326 is unknown. Basic and acidic residues predominate over residues Asp-221–Glu-238. Low complexity-rich tracts occupy residues Glu-252 to Glu-279 and Gln-294 to Gly-312. Acidic residues predominate over residues Glu-313 to Asp-326.

It belongs to the universal ribosomal protein uL4 family. In terms of assembly, part of the 50S ribosomal subunit.

Its function is as follows. One of the primary rRNA binding proteins, this protein initially binds near the 5'-end of the 23S rRNA. It is important during the early stages of 50S assembly. It makes multiple contacts with different domains of the 23S rRNA in the assembled 50S subunit and ribosome. In terms of biological role, forms part of the polypeptide exit tunnel. In Synechococcus sp. (strain JA-3-3Ab) (Cyanobacteria bacterium Yellowstone A-Prime), this protein is Large ribosomal subunit protein uL4.